Here is a 218-residue protein sequence, read N- to C-terminus: Ribose-5-phosphate isomerase A (218 aa).

Residues 28–31 (TGST), 81–84 (DGAD), and 94–97 (KGGG) each bind substrate. The Proton acceptor role is filled by E103. K121 contributes to the substrate binding site.

The protein belongs to the ribose 5-phosphate isomerase family. In terms of assembly, homodimer.

It catalyses the reaction aldehydo-D-ribose 5-phosphate = D-ribulose 5-phosphate. It functions in the pathway carbohydrate degradation; pentose phosphate pathway; D-ribose 5-phosphate from D-ribulose 5-phosphate (non-oxidative stage): step 1/1. Catalyzes the reversible conversion of ribose-5-phosphate to ribulose 5-phosphate. The chain is Ribose-5-phosphate isomerase A from Alcanivorax borkumensis (strain ATCC 700651 / DSM 11573 / NCIMB 13689 / SK2).